Consider the following 345-residue polypeptide: Ferrochelatase (345 aa).

The Fe cation site is built by histidine 215 and glutamate 296.

Belongs to the ferrochelatase family.

It localises to the cytoplasm. The enzyme catalyses heme b + 2 H(+) = protoporphyrin IX + Fe(2+). It participates in porphyrin-containing compound metabolism; protoheme biosynthesis; protoheme from protoporphyrin-IX: step 1/1. In terms of biological role, catalyzes the ferrous insertion into protoporphyrin IX. This is Ferrochelatase from Rhodopseudomonas palustris (strain TIE-1).